Here is a 201-residue protein sequence, read N- to C-terminus: uncharacterized protein (201 aa).

A signal peptide spans 1-28 (MMTFKNLRYGLSSSVVLAASLFSVLSYA).

It belongs to the fimbrial protein family.

It localises to the fimbrium. In terms of biological role, part of the yadCKLM-htrE-yadVN fimbrial operon. Could contribute to adhesion to various surfaces in specific environmental niches. This is an uncharacterized protein from Escherichia coli (strain K12).